Reading from the N-terminus, the 121-residue chain is Alpha-lactalbumin (121 aa).

The 121-residue stretch at 1 to 121 folds into the C-type lysozyme domain; it reads IDYRKCQASQ…CLEDLDQWRC (121 aa). 4 disulfide bridges follow: Cys6–Cys121, Cys28–Cys112, Cys61–Cys77, and Cys73–Cys91. N-linked (GlcNAc...) asparagine glycosylation is present at Asn44. The Ca(2+) site is built by Lys79, Asp82, Asp84, Asp87, and Asp88.

Belongs to the glycosyl hydrolase 22 family. Lactose synthase (LS) is a heterodimer of a catalytic component, beta1,4-galactosyltransferase (beta4Gal-T1) and a regulatory component, alpha-lactalbumin (LA). In terms of tissue distribution, mammary gland specific. Secreted in milk.

It localises to the secreted. Its function is as follows. Regulatory subunit of lactose synthase, changes the substrate specificity of galactosyltransferase in the mammary gland making glucose a good acceptor substrate for this enzyme. This enables LS to synthesize lactose, the major carbohydrate component of milk. In other tissues, galactosyltransferase transfers galactose onto the N-acetylglucosamine of the oligosaccharide chains in glycoproteins. The polypeptide is Alpha-lactalbumin (LALBA) (Notamacropus rufogriseus (Red-necked wallaby)).